A 410-amino-acid polypeptide reads, in one-letter code: Probable ATP-dependent RNA helicase MG308 (410 aa).

The Helicase ATP-binding domain maps to 26-179 (VFKLWPFQNI…KKQVINTKVI (154 aa)). Position 39 to 46 (39 to 46 (AETGSGKT)) interacts with ATP. The DEID box signature appears at 126–129 (DEID). One can recognise a Helicase C-terminal domain in the interval 190-357 (LVKHFVVHLN…DLKFLTENNQ (168 aa)).

Belongs to the DEAD box helicase family.

The catalysed reaction is ATP + H2O = ADP + phosphate + H(+). This is Probable ATP-dependent RNA helicase MG308 from Mycoplasma genitalium (strain ATCC 33530 / DSM 19775 / NCTC 10195 / G37) (Mycoplasmoides genitalium).